Here is a 185-residue protein sequence, read N- to C-terminus: Dual-action ribosomal maturation protein DarP (185 aa).

The protein belongs to the DarP family.

The protein resides in the cytoplasm. Its function is as follows. Member of a network of 50S ribosomal subunit biogenesis factors which assembles along the 30S-50S interface, preventing incorrect 23S rRNA structures from forming. Promotes peptidyl transferase center (PTC) maturation. This is Dual-action ribosomal maturation protein DarP from Vibrio vulnificus (strain YJ016).